We begin with the raw amino-acid sequence, 302 residues long: S-adenosylmethionine sensor upstream of mTORC1 (302 aa).

S-adenosyl-L-homocysteine contacts are provided by Arg-73, Gly-132, and Asp-150. S-adenosyl-L-methionine is bound by residues Arg-73, Gly-132, Asp-150, Leu-151, Asp-162, Phe-163, and Ser-196. Positions 162, 163, and 196 each coordinate S-adenosyl-L-homocysteine.

It belongs to the BMT2/SAMTOR family.

S-adenosyl-L-methionine-binding protein. It is unclear whether this protein acts as a sensor of S-adenosyl-L-methionine to signal methionine sufficiency to mTORC1. Probably acts as a S-adenosyl-L-methionine-dependent methyltransferase. This is S-adenosylmethionine sensor upstream of mTORC1 from Drosophila melanogaster (Fruit fly).